The chain runs to 550 residues: DNA mismatch repair protein MutL (550 aa).

It belongs to the DNA mismatch repair MutL/HexB family.

In terms of biological role, this protein is involved in the repair of mismatches in DNA. It is required for dam-dependent methyl-directed DNA mismatch repair. May act as a 'molecular matchmaker', a protein that promotes the formation of a stable complex between two or more DNA-binding proteins in an ATP-dependent manner without itself being part of a final effector complex. The polypeptide is DNA mismatch repair protein MutL (Microcystis aeruginosa (strain NIES-843 / IAM M-2473)).